We begin with the raw amino-acid sequence, 149 residues long: Ribonuclease pancreatic (149 aa).

Residues 1–25 (MGLEKSLILFPLLVLVLGWVQPSLA) form the signal peptide. Positions 32 and 35 each coordinate substrate. The Proton acceptor role is filled by His37. 4 disulfides stabilise this stretch: Cys51-Cys109, Cys65-Cys120, Cys83-Cys135, and Cys90-Cys97. Residues 66–70 (KPVNT), Lys91, and Arg110 each bind substrate. The active-site Proton donor is the His144.

It belongs to the pancreatic ribonuclease family. As to quaternary structure, monomer. Interacts with and forms tight 1:1 complexes with RNH1. Dimerization of two such complexes may occur. Interaction with RNH1 inhibits this protein. Pancreas.

It localises to the secreted. The catalysed reaction is an [RNA] containing cytidine + H2O = an [RNA]-3'-cytidine-3'-phosphate + a 5'-hydroxy-ribonucleotide-3'-[RNA].. The enzyme catalyses an [RNA] containing uridine + H2O = an [RNA]-3'-uridine-3'-phosphate + a 5'-hydroxy-ribonucleotide-3'-[RNA].. Its function is as follows. Endonuclease that catalyzes the cleavage of RNA on the 3' side of pyrimidine nucleotides. Acts on single-stranded and double-stranded RNA. The chain is Ribonuclease pancreatic (RNASE1) from Uranomys ruddi (White-bellied brush-furred rat).